Reading from the N-terminus, the 571-residue chain is FAD-linked oxidoreductase patO (571 aa).

Positions M1–G23 are cleaved as a signal peptide. N-linked (GlcNAc...) asparagine glycans are attached at residues N47, N101, N125, N179, N341, N374, N380, N421, N445, and N480. Residues T115–D294 form the FAD-binding PCMH-type domain.

This sequence belongs to the oxygen-dependent FAD-linked oxidoreductase family. FAD serves as cofactor.

It localises to the vacuole lumen. It functions in the pathway mycotoxin biosynthesis; patulin biosynthesis. FAD-linked oxidoreductase; part of the gene cluster that mediates the biosynthesis of patulin, an acetate-derived tetraketide mycotoxin produced by several fungal species that shows antimicrobial properties against several bacteria. PatO acts with patJ in the vacuole to convert gentisyl alcohol to isoepoxydon. The pathway begins with the synthesis of 6-methylsalicylic acid by the polyketide synthase (PKS) patK via condensation of acetate and malonate units. The 6-methylsalicylic acid decarboxylase patG then catalyzes the decarboxylation of 6-methylsalicylic acid to yield m-cresol (also known as 3-methylphenol). These first reactions occur in the cytosol. The intermediate m-cresol is then transported into the endoplasmic reticulum where the cytochrome P450 monooxygenase patH converts it to m-hydroxybenzyl alcohol, which is further converted to gentisyl alcohol by the cytochrome P450 monooxygenase patI. The oxidoreductases patJ and patO further convert gentisyl alcohol to isoepoxydon in the vacuole. PatN catalyzes then the transformation of isoepoxydon into phyllostine. The cluster protein patF is responsible for the conversion from phyllostine to neopatulin whereas the alcohol dehydrogenase patD converts neopatulin to E-ascladiol. The steps between isoepoxydon and E-ascladiol occur in the cytosol, and E-ascladiol is probably secreted to the extracellular space by one of the cluster-specific transporters patC or patM. Finally, the secreted patulin synthase patE catalyzes the conversion of E-ascladiol to patulin. The sequence is that of FAD-linked oxidoreductase patO from Penicillium expansum (Blue mold rot fungus).